Reading from the N-terminus, the 87-residue chain is U-scoloptoxin(23)-Er1a (87 aa).

Positions 1–29 are cleaved as a signal peptide; the sequence is MSLIVVRTHSFLFVLVLLLFASVFHSVDS. The tract at residues 32-54 is disordered; sequence FNPNGRYGRRDSASALSDASENK.

Belongs to the scoloptoxin-23 family. Expressed by the venom gland.

The protein resides in the secreted. The polypeptide is U-scoloptoxin(23)-Er1a (Ethmostigmus rubripes (Giant centipede)).